The chain runs to 450 residues: Carbamoyl phosphate synthase arginine-specific small chain (450 aa).

Residues 1-29 (MFAARLFKAMPARASAFPSVNASIQSRFM) constitute a mitochondrion transit peptide. One can recognise a Glutamine amidotransferase type-1 domain in the interval 220-407 (HVAVIDCGVK…LDSVRKYKAS (188 aa)). Cys-296 functions as the Nucleophile in the catalytic mechanism. Residues His-380 and Glu-382 contribute to the active site.

This sequence belongs to the CarA family. In terms of assembly, heterodimer composed of 2 chains; the small (or glutamine) chain promotes the hydrolysis of glutamine to ammonia, which is used by the large (or ammonia) chain to synthesize carbamoyl phosphate.

The protein resides in the mitochondrion matrix. The enzyme catalyses hydrogencarbonate + L-glutamine + 2 ATP + H2O = carbamoyl phosphate + L-glutamate + 2 ADP + phosphate + 2 H(+). It carries out the reaction L-glutamine + H2O = L-glutamate + NH4(+). Its pathway is amino-acid biosynthesis; L-arginine biosynthesis; carbamoyl phosphate from bicarbonate: step 1/1. Its function is as follows. Small subunit of the arginine-specific carbamoyl phosphate synthase (CPSase). CPSase catalyzes the formation of carbamoyl phosphate from the ammonia moiety of glutamine, carbonate, and phosphate donated by ATP, the first step of the arginine biosynthetic pathway. The small subunit (glutamine amidotransferase) binds and cleaves glutamine to supply the large subunit with the substrate ammonia. This chain is Carbamoyl phosphate synthase arginine-specific small chain (cpa1), found in Aspergillus oryzae (strain ATCC 42149 / RIB 40) (Yellow koji mold).